Reading from the N-terminus, the 725-residue chain is Sodium/hydrogen exchanger 7 (725 aa).

Residues 1 to 20 (MEPGDAARPGSGRATGAPPP) form a disordered region. Residues 1 to 21 (MEPGDAARPGSGRATGAPPPR) are Cytoplasmic-facing. Residues 22–42 (LLLLPLLLGWGLRVAAAASAS) form a helical membrane-spanning segment. The Lumenal portion of the chain corresponds to 43 to 70 (SSGAAAEDSSAMEELATEKEAEESHRQD). A helical transmembrane segment spans residues 71–91 (SVSLLTFILLLTLTILTIWLF). Residues 92-95 (KHRR) are Cytoplasmic-facing. A helical membrane pass occupies residues 96-116 (VRFLHETGLAMIYGLIVGVIL). At 117–175 (RYGTPATSGRDKSLSCTQEDRAFSTLLVNVSGKFFEYTLKGEISPGKINSVEQNDMLRK) the chain is on the lumenal side. N-linked (GlcNAc...) asparagine glycosylation is present at N145. A helical membrane pass occupies residues 176-196 (VTFDPEVFFNILLPPIIFHAG). Residues 197 to 210 (YSLKKRHFFRNLGS) lie on the Cytoplasmic side of the membrane. The chain crosses the membrane as a helical span at residues 211-231 (ILAYAFLGTAVSCFIIGNLMY). Residues 232–251 (GVVKLMKIMGQLSDKFYYTD) are Lumenal-facing. A helical membrane pass occupies residues 252-272 (CLFFGAIISATDPVTVLAIFN). The Cytoplasmic portion of the chain corresponds to 273–277 (ELHAD). The helical transmembrane segment at 278–298 (VDLYALLFGESVLNDAVAIVL) threads the bilayer. The Lumenal segment spans residues 299–322 (SSSIVAYQPAGLNTHAFDAAAFFK). The chain crosses the membrane as a helical span at residues 323 to 343 (SVGIFLGIFSGSFTMGAVTGV). Residues 344–349 (NANVTK) lie on the Cytoplasmic side of the membrane. 2 consecutive transmembrane segments (helical) span residues 350–370 (FTKL…MSWS) and 371–391 (TFLL…FCGI). Residues 392–414 (TQAHYTYNNLSVESRSRTKQLFE) are Cytoplasmic-facing. Residues 415–435 (VLHFLAENFIFSYMGLALFTF) traverse the membrane as a helical segment. At 436–442 (QKHVFSP) the chain is on the lumenal side. Residues 443–463 (IFIIGAFVAIFLGRAAHIYPL) form a helical membrane-spanning segment. The Cytoplasmic segment spans residues 464–474 (SFFLNLGRRHK). Residues 475 to 497 (IGWNFQHMMMFSGLRGAMAFALA) form a helical membrane-spanning segment. Residues 498-513 (IRDTASYARQMMFTTT) are Lumenal-facing. The helical transmembrane segment at 514-534 (LLIVFFTVWIIGGGTTPMLSW) threads the bilayer. 2 required for trans-Golgi network localization regions span residues 533-559 (SWLN…YFRV) and 563-568 (PDQDPP). Residues 535 to 725 (LNIRVGVEEP…RLVFPLEDNA (191 aa)) lie on the Cytoplasmic side of the membrane. S545 carries the phosphoserine modification. Disordered regions lie at residues 567–590 (PPPN…GNRT) and 669–714 (TVTA…SSRG). Low complexity predominate over residues 675-684 (SSSSHTASTS). A compositionally biased stretch (basic and acidic residues) spans 687–704 (GSRRTKSSSEEVLERDLG).

This sequence belongs to the monovalent cation:proton antiporter 1 (CPA1) transporter (TC 2.A.36) family. In terms of assembly, interacts with SCAMP1, SCAMP2 and SCAMP5; may participate in its shuttling from trans-Golgi network to recycling endosomes. Post-translationally, N-glycosylated. As to expression, ubiquitously expressed.

It is found in the golgi apparatus. The protein resides in the trans-Golgi network membrane. The protein localises to the recycling endosome membrane. Its subcellular location is the cell membrane. The enzyme catalyses Na(+)(in) + H(+)(out) = Na(+)(out) + H(+)(in). The catalysed reaction is K(+)(in) + H(+)(out) = K(+)(out) + H(+)(in). With respect to regulation, inhibited by benzamil and quinine but not by amiloride. Its function is as follows. Golgi Na(+), K(+)/(H+) antiporter. Mediates the electoneutral influx of Na(+) or K(+) in exchange for H(+). May contribute to the regulation of Golgi apparatus volume and pH. The chain is Sodium/hydrogen exchanger 7 (SLC9A7) from Homo sapiens (Human).